The following is a 455-amino-acid chain: Adhesin YadA (455 aa).

The signal sequence occupies residues 1–25 (MTKDFKISVSAALISALFSSPYAFA). Residues 26-363 (DDYDGIPNLT…KKAIRESNQY (338 aa)) form a surface exposed passenger domain region. The stretch at 209 to 243 (VNVAQLKKEIEKTQENTNKRSAELLANANAYADNK) forms a coiled coil. Residues 364-402 (TDHKFRQLDNRLDKLDTRVDKGLASSAALNSLFQPYGVG) form an outer membrane translocation of the passenger domain region. 4 beta stranded membrane-spanning segments follow: residues 402 to 412 (GKVNFTAGVGG), 416 to 427 (SQALAIGSGYRV), 434 to 440 (KAGVAYA), and 444 to 455 (DVMYNASFNIEW). Residues 403–455 (KVNFTAGVGGYRSSQALAIGSGYRVNENVALKAGVAYAGSSDVMYNASFNIEW) are translocator domain.

The protein belongs to the autotransporter-2 (AT-2) (TC 1.B.40) family. As to quaternary structure, homotrimer; in gels migrates as monomers, dimers and homotrimers. Does not form trimers with distantly related EibA from E.coli; coexpression was lethal and one of the genes is eliminated in vivo. If the full translocator domain (368-455) is exchanged with that of EibA ('299-392'), will form heterotrimers with EibA and vice-versa.

The protein localises to the cell surface. Its subcellular location is the cell outer membrane. In terms of biological role, collagen-binding outer membrane protein forming a fibrillar matrix on the bacterial cell surface. Promotes initial attachment and invasion of eukaryotic cells. Also protects the bacteria by being responsible for agglutination, serum resistance, complement inactivation and phagocytosis resistance. The chain is Adhesin YadA (yadA) from Yersinia enterocolitica.